Reading from the N-terminus, the 123-residue chain is UPF0482 protein YE2026 (123 aa).

An N-terminal signal peptide occupies residues 1 to 31 (MKITSLPRLMRVFLPVAVLALPLAWQTAALA). Residues 47–66 (GNNDPMSKEQARQSQQQWDD) are disordered.

This sequence belongs to the UPF0482 family.

This is UPF0482 protein YE2026 from Yersinia enterocolitica serotype O:8 / biotype 1B (strain NCTC 13174 / 8081).